The chain runs to 481 residues: ATP synthase subunit beta, chloroplastic (481 aa).

Residue 161–168 participates in ATP binding; the sequence is GGAGVGKT.

It belongs to the ATPase alpha/beta chains family. In terms of assembly, F-type ATPases have 2 components, CF(1) - the catalytic core - and CF(0) - the membrane proton channel. CF(1) has five subunits: alpha(3), beta(3), gamma(1), delta(1), epsilon(1). CF(0) has four main subunits: a(1), b(1), b'(1) and c(9-12).

Its subcellular location is the plastid. The protein localises to the chloroplast thylakoid membrane. The enzyme catalyses ATP + H2O + 4 H(+)(in) = ADP + phosphate + 5 H(+)(out). In terms of biological role, produces ATP from ADP in the presence of a proton gradient across the membrane. The catalytic sites are hosted primarily by the beta subunits. The polypeptide is ATP synthase subunit beta, chloroplastic (Mesostigma viride (Green alga)).